The sequence spans 222 residues: Glutathione S-transferase A1 (222 aa).

M1 carries the post-translational modification N-acetylmethionine. A2 carries the N-acetylalanine; in Glutathione S-transferase A1, N-terminally processed modification. The GST N-terminal domain maps to 3 to 83 (EKPKLHYFNA…YIASKYNLYG (81 aa)). K4 carries the N6-succinyllysine modification. Glutathione contacts are provided by residues Y9, R45, 54 to 55 (QV), and 67 to 68 (QT). A GST C-terminal domain is found at 85–207 (DIKERALIDM…LQPGSPRKPP (123 aa)).

It belongs to the GST superfamily. Alpha family. In terms of assembly, homodimer or heterodimer of GSTA1 and GSTA2. Liver.

It is found in the cytoplasm. It carries out the reaction RX + glutathione = an S-substituted glutathione + a halide anion + H(+). The catalysed reaction is prostaglandin A2 + glutathione = prostaglandin A2-S-(R)-glutathione. The enzyme catalyses prostaglandin J2 + glutathione = prostaglandin J2-S-(R)-glutathione. It catalyses the reaction (13S)-hydroperoxy-(9Z,11E)-octadecadienoate + 2 glutathione = (13S)-hydroxy-(9Z,11E)-octadecadienoate + glutathione disulfide + H2O. It carries out the reaction androst-5-ene-3,17-dione = androst-4-ene-3,17-dione. With respect to regulation, the isomerase activity is inhibited by S-methylglutathione (GSMe). Its function is as follows. Glutathione S-transferase that catalyzes the nucleophilic attack of the sulfur atom of glutathione on the electrophilic groups of a wide range of exogenous and endogenous compounds. Involved in the formation of glutathione conjugates of both prostaglandin A2 (PGA2) and prostaglandin J2 (PGJ2). It also catalyzes the isomerization of D5-androstene-3,17-dione (AD) into D4-androstene-3,17-dione and may therefore play an important role in hormone biosynthesis. Through its glutathione-dependent peroxidase activity toward the fatty acid hydroperoxide (13S)-hydroperoxy-(9Z,11E)-octadecadienoate/13-HPODE it is also involved in the metabolism of oxidized linoleic acid. This Homo sapiens (Human) protein is Glutathione S-transferase A1 (GSTA1).